The chain runs to 453 residues: Ribosomal protein uS12 methylthiotransferase RimO (453 aa).

An MTTase N-terminal domain is found at 9–124; the sequence is PKVGFVSLGC…VMEAVHTHLP (116 aa). [4Fe-4S] cluster-binding residues include cysteine 18, cysteine 54, cysteine 83, cysteine 155, cysteine 159, and cysteine 162. Residues 141 to 382 enclose the Radical SAM core domain; it reads LTPKHYAYLK…MEVAERVSAR (242 aa). The 69-residue stretch at 385–453 folds into the TRAM domain; the sequence is QRKVGKSLRV…ADGHDLWGEV (69 aa).

The protein belongs to the methylthiotransferase family. RimO subfamily. The cofactor is [4Fe-4S] cluster.

The protein localises to the cytoplasm. It carries out the reaction L-aspartate(89)-[ribosomal protein uS12]-hydrogen + (sulfur carrier)-SH + AH2 + 2 S-adenosyl-L-methionine = 3-methylsulfanyl-L-aspartate(89)-[ribosomal protein uS12]-hydrogen + (sulfur carrier)-H + 5'-deoxyadenosine + L-methionine + A + S-adenosyl-L-homocysteine + 2 H(+). Catalyzes the methylthiolation of an aspartic acid residue of ribosomal protein uS12. In Ralstonia pickettii (strain 12J), this protein is Ribosomal protein uS12 methylthiotransferase RimO.